Consider the following 199-residue polypeptide: MYETYHSGWIECITGSMFSGKSEELIRRLRRGIYAKQKVVVFKPAIDDRYHKEKVVSHNGNAIEAINISKASEIMTHNLTNVDVIGIDEVQFFDDEIVSIVEKLSADGHRVIVAGLDMDFRGEPFEPMPKLMAVSEQVTKLQAVCAVCGSSSSRTQRLINGKPAKIDDPIILVGANESYEPRCRAHHIVAPSDNNKEEL.

ATP-binding positions include 15–22 and 88–91; these read GSMFSGKS and DEVQ. Residue Glu89 is the Proton acceptor of the active site. 4 residues coordinate Zn(2+): Cys145, Cys148, Cys183, and His186.

This sequence belongs to the thymidine kinase family. Homotetramer.

The protein resides in the cytoplasm. It carries out the reaction thymidine + ATP = dTMP + ADP + H(+). This Staphylococcus aureus (strain Mu50 / ATCC 700699) protein is Thymidine kinase.